The sequence spans 191 residues: MKTLFDTKELLNEFDINLIGIDEAGRGALAGPMMMAACKLNKKLDGLCDSKKLSEKKREELYEIIIKNSNYLILAFSSEQIDALGLSTCLKTGLKLIKKHFKTENNFLYDGNTNLGINGIKTQIKADASILQVSAASILAKVSKDRVMNFLAKDFPCYEFEKNKAYGTKAHKELIAKFGICKLHRKSFKLL.

The RNase H type-2 domain occupies Ile-16–Leu-191. A divalent metal cation is bound by residues Asp-22, Glu-23, and Asp-110.

This sequence belongs to the RNase HII family. The cofactor is Mn(2+). Mg(2+) serves as cofactor.

Its subcellular location is the cytoplasm. The enzyme catalyses Endonucleolytic cleavage to 5'-phosphomonoester.. Its function is as follows. Endonuclease that specifically degrades the RNA of RNA-DNA hybrids. This chain is Ribonuclease HII, found in Campylobacter jejuni subsp. jejuni serotype O:6 (strain 81116 / NCTC 11828).